The primary structure comprises 461 residues: Acetylornithine aminotransferase, mitochondrial (461 aa).

The tract at residues 36 to 56 (YATASQLTHPDPTEDSPSGKM) is disordered. An N6-(pyridoxal phosphate)lysine modification is found at Lys-312.

The protein belongs to the class-III pyridoxal-phosphate-dependent aminotransferase family. It depends on pyridoxal 5'-phosphate as a cofactor.

The protein resides in the mitochondrion matrix. The catalysed reaction is N(2)-acetyl-L-ornithine + 2-oxoglutarate = N-acetyl-L-glutamate 5-semialdehyde + L-glutamate. It functions in the pathway amino-acid biosynthesis; L-arginine biosynthesis; N(2)-acetyl-L-ornithine from L-glutamate: step 4/4. The chain is Acetylornithine aminotransferase, mitochondrial (arg-8) from Neurospora crassa (strain ATCC 24698 / 74-OR23-1A / CBS 708.71 / DSM 1257 / FGSC 987).